Reading from the N-terminus, the 347-residue chain is 4-hydroxy-2-oxovalerate aldolase (347 aa).

Positions 2-252 (ILISDATLRD…DTRTTFEHVM (251 aa)) constitute a Pyruvate carboxyltransferase domain. 10–11 (RD) provides a ligand contact to substrate. Aspartate 11 serves as a coordination point for Mn(2+). The active-site Proton acceptor is histidine 14. Residues serine 164 and histidine 191 each coordinate substrate. Mn(2+)-binding residues include histidine 191 and histidine 193.

This sequence belongs to the 4-hydroxy-2-oxovalerate aldolase family.

It catalyses the reaction (S)-4-hydroxy-2-oxopentanoate = acetaldehyde + pyruvate. The protein is 4-hydroxy-2-oxovalerate aldolase (mhpE) of Burkholderia thailandensis (strain ATCC 700388 / DSM 13276 / CCUG 48851 / CIP 106301 / E264).